The primary structure comprises 347 residues: Membrane progestin receptor gamma-B (347 aa).

Residues 1–52 (MLSLIKLQRVFNVHQVPKAFHEDGIISGYRHPRSSATECVWSLFQLTNETLN) lie on the Cytoplasmic side of the membrane. A helical transmembrane segment spans residues 53-73 (VWTHFLPTWYFLWKLMTVLLM). The Extracellular segment spans residues 74–81 (EDVWNEAY). A helical membrane pass occupies residues 82 to 102 (TWPLLVFLFSCCVYPLASSCA). Topologically, residues 103 to 114 (HTFSSMSTRARH) are cytoplasmic. Residues 115 to 135 (ICYFFDYGALSFYSLGSAISY) form a helical membrane-spanning segment. The Extracellular segment spans residues 136 to 138 (SAY). A helical transmembrane segment spans residues 139-159 (VFPDAWLSSSFHAYYISVAVF). At 160–201 (NTVLSTSLACYSRLGLPLLHYSHDIVERFSERQCPRMSKVLR) the chain is on the cytoplasmic side. A helical transmembrane segment spans residues 202–222 (ILAFAYPYLFDNIPLFYRLFV). The Extracellular segment spans residues 223-235 (CVGEGCTDNEANS). Residues 236 to 256 (VHVQHTLLAFLTSFLFATHLP) traverse the membrane as a helical segment. Residues 257-314 (ERLAPGRFDYIGHSHQLFHVCAIIGTHFQMKAIEMDMGLRRSQLLASAPAISFNNTIG) are Cytoplasmic-facing. Residues 315–335 (AALLCVSVSLGIICVYSLPLL) traverse the membrane as a helical segment. At 336–347 (YSSNPKNTANKE) the chain is on the extracellular side.

This sequence belongs to the ADIPOR family.

The protein resides in the membrane. Functionally, steroid membrane receptor. Binds progesterone. May be involved in oocyte maturation. This Danio rerio (Zebrafish) protein is Membrane progestin receptor gamma-B.